Consider the following 375-residue polypeptide: Chaperone protein DnaJ (375 aa).

The 66-residue stretch at 5–70 folds into the J domain; sequence DYYSLLEVER…QKRAAYDRYG (66 aa). Residues 135–213 form a CR-type zinc finger; it reads GKTVDIEIDV…CHGEGRCEKH (79 aa). Zn(2+)-binding residues include Cys148, Cys151, Cys165, Cys168, Cys187, Cys190, Cys201, and Cys204. CXXCXGXG motif repeat units follow at residues 148-155, 165-172, 187-194, and 201-208; these read CDACHGSG, CDTCHGSG, CPVCQGKG, and CPECHGEG.

This sequence belongs to the DnaJ family. Homodimer. It depends on Zn(2+) as a cofactor.

Its subcellular location is the cytoplasm. Participates actively in the response to hyperosmotic and heat shock by preventing the aggregation of stress-denatured proteins and by disaggregating proteins, also in an autonomous, DnaK-independent fashion. Unfolded proteins bind initially to DnaJ; upon interaction with the DnaJ-bound protein, DnaK hydrolyzes its bound ATP, resulting in the formation of a stable complex. GrpE releases ADP from DnaK; ATP binding to DnaK triggers the release of the substrate protein, thus completing the reaction cycle. Several rounds of ATP-dependent interactions between DnaJ, DnaK and GrpE are required for fully efficient folding. Also involved, together with DnaK and GrpE, in the DNA replication of plasmids through activation of initiation proteins. This Zymomonas mobilis subsp. mobilis (strain ATCC 31821 / ZM4 / CP4) protein is Chaperone protein DnaJ.